Consider the following 200-residue polypeptide: Phospholipase A2 inhibitor CgMIP-I (200 aa).

Residues 1 to 19 (MKYLHTICLLFIFVARGNS) form the signal peptide. 7 disulfides stabilise this stretch: Cys-22–Cys-46, Cys-25–Cys-32, Cys-39–Cys-67, Cys-73–Cys-94, Cys-95–Cys-100, Cys-118–Cys-143, and Cys-136–Cys-165. N-linked (GlcNAc...) asparagine glycosylation is present at Asn-176.

This sequence belongs to the CNF-like-inhibitor family. Homomer of 110 kDa composed of 20-25-kDa subunits. N-glycosylated. The glycosidic chain may contain superficial sialic acid residues. In terms of tissue distribution, expressed by the liver.

It is found in the secreted. In terms of biological role, inhibits the enzymatic activity of basic phospholipase A2. Specifically neutralizes PLA2, myotoxic, edema-forming, cytolytic, and anti-coagulant activities, as well as intracerebral lethal effect of the basic myotoxin I from the same venom (AC P0DQP6), crotoxin heterodimer and crotoxin subunit B alone. Does not block the enzymatic activity of crude acidic PLA2 fractions from the same venom. In Cerrophidion godmani (Porthidium godmani), this protein is Phospholipase A2 inhibitor CgMIP-I.